The primary structure comprises 877 residues: Alanine--tRNA ligase (877 aa).

4 residues coordinate Zn(2+): His-562, His-566, Cys-664, and His-668.

The protein belongs to the class-II aminoacyl-tRNA synthetase family. Zn(2+) is required as a cofactor.

It is found in the cytoplasm. It catalyses the reaction tRNA(Ala) + L-alanine + ATP = L-alanyl-tRNA(Ala) + AMP + diphosphate. Catalyzes the attachment of alanine to tRNA(Ala) in a two-step reaction: alanine is first activated by ATP to form Ala-AMP and then transferred to the acceptor end of tRNA(Ala). Also edits incorrectly charged Ser-tRNA(Ala) and Gly-tRNA(Ala) via its editing domain. The polypeptide is Alanine--tRNA ligase (Synechocystis sp. (strain ATCC 27184 / PCC 6803 / Kazusa)).